Here is a 284-residue protein sequence, read N- to C-terminus: 4-diphosphocytidyl-2-C-methyl-D-erythritol kinase (284 aa).

The active site involves Lys14. 98–108 (PMGGGLGGGSS) contributes to the ATP binding site. Asp140 is a catalytic residue.

Belongs to the GHMP kinase family. IspE subfamily.

The enzyme catalyses 4-CDP-2-C-methyl-D-erythritol + ATP = 4-CDP-2-C-methyl-D-erythritol 2-phosphate + ADP + H(+). It functions in the pathway isoprenoid biosynthesis; isopentenyl diphosphate biosynthesis via DXP pathway; isopentenyl diphosphate from 1-deoxy-D-xylulose 5-phosphate: step 3/6. Its function is as follows. Catalyzes the phosphorylation of the position 2 hydroxy group of 4-diphosphocytidyl-2C-methyl-D-erythritol. This is 4-diphosphocytidyl-2-C-methyl-D-erythritol kinase from Shewanella halifaxensis (strain HAW-EB4).